Reading from the N-terminus, the 804-residue chain is Leucine--tRNA ligase (804 aa).

The 'HIGH' region motif lies at 40-51 (PYPSGAGLHVGH). A 'KMSKS' region motif is present at residues 576–580 (KMSKS). An ATP-binding site is contributed by Lys579.

This sequence belongs to the class-I aminoacyl-tRNA synthetase family.

Its subcellular location is the cytoplasm. It catalyses the reaction tRNA(Leu) + L-leucine + ATP = L-leucyl-tRNA(Leu) + AMP + diphosphate. In Staphylococcus aureus (strain bovine RF122 / ET3-1), this protein is Leucine--tRNA ligase.